Reading from the N-terminus, the 349-residue chain is 4-hydroxythreonine-4-phosphate dehydrogenase (349 aa).

Positions 141 and 142 each coordinate substrate. The a divalent metal cation site is built by H176, H221, and H276. Residues K284, N293, and R302 each contribute to the substrate site.

This sequence belongs to the PdxA family. In terms of assembly, homodimer. The cofactor is Zn(2+). Mg(2+) serves as cofactor. It depends on Co(2+) as a cofactor.

The protein resides in the cytoplasm. The enzyme catalyses 4-(phosphooxy)-L-threonine + NAD(+) = 3-amino-2-oxopropyl phosphate + CO2 + NADH. It functions in the pathway cofactor biosynthesis; pyridoxine 5'-phosphate biosynthesis; pyridoxine 5'-phosphate from D-erythrose 4-phosphate: step 4/5. Functionally, catalyzes the NAD(P)-dependent oxidation of 4-(phosphooxy)-L-threonine (HTP) into 2-amino-3-oxo-4-(phosphooxy)butyric acid which spontaneously decarboxylates to form 3-amino-2-oxopropyl phosphate (AHAP). This Methylorubrum extorquens (strain CM4 / NCIMB 13688) (Methylobacterium extorquens) protein is 4-hydroxythreonine-4-phosphate dehydrogenase.